Consider the following 157-residue polypeptide: Arginine repressor (157 aa).

This sequence belongs to the ArgR family.

The protein localises to the cytoplasm. It participates in amino-acid biosynthesis; L-arginine biosynthesis [regulation]. Regulates arginine biosynthesis genes. The chain is Arginine repressor from Deinococcus deserti (strain DSM 17065 / CIP 109153 / LMG 22923 / VCD115).